A 347-amino-acid chain; its full sequence is GTP 3',8-cyclase (347 aa).

In terms of domain architecture, Radical SAM core spans 12-242 (FRPFGVLRLS…QRIDARWPLR (231 aa)). Residue Arg-19 participates in GTP binding. [4Fe-4S] cluster contacts are provided by Cys-26 and Cys-30. Tyr-32 serves as a coordination point for S-adenosyl-L-methionine. [4Fe-4S] cluster is bound at residue Cys-33. Residue Arg-65 participates in GTP binding. Residue Gly-69 coordinates S-adenosyl-L-methionine. Thr-104 provides a ligand contact to GTP. Residue Ser-129 participates in S-adenosyl-L-methionine binding. Lys-178 contributes to the GTP binding site. Residue Met-212 participates in S-adenosyl-L-methionine binding. The [4Fe-4S] cluster site is built by Cys-275 and Cys-278. Position 280–282 (280–282 (RLR)) interacts with GTP. Cys-292 is a binding site for [4Fe-4S] cluster.

The protein belongs to the radical SAM superfamily. MoaA family. As to quaternary structure, monomer and homodimer. It depends on [4Fe-4S] cluster as a cofactor.

The enzyme catalyses GTP + AH2 + S-adenosyl-L-methionine = (8S)-3',8-cyclo-7,8-dihydroguanosine 5'-triphosphate + 5'-deoxyadenosine + L-methionine + A + H(+). It participates in cofactor biosynthesis; molybdopterin biosynthesis. Its function is as follows. Catalyzes the cyclization of GTP to (8S)-3',8-cyclo-7,8-dihydroguanosine 5'-triphosphate. In Synechococcus sp. (strain WH7803), this protein is GTP 3',8-cyclase.